A 1092-amino-acid polypeptide reads, in one-letter code: Rho GTPase-activating protein 7 (1092 aa).

The 68-residue stretch at 11-78 folds into the SAM domain; that stretch reads LTQIEAKEAC…LNKCAVMKLE (68 aa). Phosphoserine is present on residues Ser86, Ser89, and Ser129. Disordered regions lie at residues 121–179, 297–330, 409–434, and 492–553; these read PKQD…DATT, RSVS…TRSL, GPGH…NSSS, and SDEG…SGVG. A compositionally biased stretch (polar residues) spans 130 to 143; the sequence is PDNSRLQSATSHES. Low complexity-rich tracts occupy residues 154–174 and 299–325; these read VASV…AAHS and VSNS…SPVT. Residues 275–448 are focal adhesion-targeting (FAT); sequence QLNCVEISAL…RLSIYDNVPG (174 aa). Ser322 is modified (phosphoserine). The span at 415–426 shows a compositional bias: basic and acidic residues; that stretch reads LRRENSHDSPKE. Positions 500–512 are enriched in polar residues; it reads ALDSVSPCPSSPK. A compositionally biased stretch (basic and acidic residues) spans 514 to 526; the sequence is IHLDVDHDRRTPS. The segment covering 527 to 536 has biased composition (polar residues); it reads DLDSTGNSLN. Residues 615–637 are polybasic cluster (PBR); the sequence is KHGFSWAVPKFMKRIKVPDYKDR. The Rho-GAP domain occupies 642-848; that stretch reads VPLTVNVQRS…HMIAECKKLF (207 aa). The START domain occupies 878-1085; the sequence is NSDQPADYRH…RDSFSNQNTE (208 aa).

As to quaternary structure, interacts with EF1A1, facilitates EF1A1 distribution to the membrane periphery and ruffles upon growth factor stimulation and suppresses cell migration. Interacts with tensin TNS1 (via N-terminus); the interaction is decreased by phosphorylation of TNS1. Interacts with TNS3 and PTEN; in resting cells, interacts with TNS3 (via C2 tensin-type domain) but, following growth factor stimulation, TNS3 and PTEN are phosphorylated which leads to weakened interaction with TNS3 and enhanced interaction with PTEN. Interacts (via C-terminus) with tensin TNS4 (via SH2 domain); the interaction is independent of tyrosine phosphorylation of DLC1. In terms of tissue distribution, widely expressed with the highest levels in heart, liver and lung.

Its subcellular location is the cytoplasm. The protein localises to the cell junction. It is found in the focal adhesion. The protein resides in the membrane. Functionally, functions as a GTPase-activating protein for the small GTPases RHOA, RHOB, RHOC and CDC42, terminating their downstream signaling. This induces morphological changes and detachment through cytoskeletal reorganization, playing a critical role in biological processes such as cell migration and proliferation. Also functions in vivo as an activator of the phospholipase PLCD1. Active DLC1 increases cell migration velocity but reduces directionality. Required for growth factor-induced epithelial cell migration; in resting cells, interacts with TNS3 while PTEN interacts with the p85 regulatory subunit of the PI3K kinase complex but growth factor stimulation induces phosphorylation of TNS3 and PTEN, causing them to change their binding preference so that PTEN interacts with DLC1 and TNS3 interacts with p85. The PTEN-DLC1 complex translocates to the posterior of migrating cells to activate RHOA while the TNS3-p85 complex translocates to the leading edge of migrating cells to promote RAC1 activation. The chain is Rho GTPase-activating protein 7 (Dlc1) from Mus musculus (Mouse).